Consider the following 407-residue polypeptide: Semenogelin-2 (407 aa).

An N-terminal signal peptide occupies residues 1 to 23 (MKSIILFVLSLVLILEKQAAVMG). Disordered stretches follow at residues 25–60 (KDGSKGQLPSGSSQFPHGQKGQHYFGQKDQQHTKSK), 133–158 (GQAHCGTQNPSQDQGNSPSGKGLSSQ), 173–192 (KEQASASGAQKGRTQGGSQS), and 272–407 (NLNQ…NKIS). Polar residues-rich tracts occupy residues 31–40 (QLPSGSSQFP), 137–158 (CGTQNPSQDQGNSPSGKGLSSQ), and 174–192 (EQASASGAQKGRTQGGSQS). A compositionally biased stretch (basic and acidic residues) spans 292 to 310 (RTEERQLNHGEKSVQKDVS). A compositionally biased stretch (polar residues) spans 325-334 (KSQNQVTIHS). The segment covering 335 to 345 (QDQEHGHKENK) has biased composition (basic and acidic residues). The span at 372-397 (GSISIQTEEQIHGKSQNXVRIPSQAQ) shows a compositional bias: polar residues.

It belongs to the semenogelin family. In terms of assembly, interacts with SERPINA5.

It is found in the secreted. In terms of biological role, participates in the formation of a gel matrix (sperm coagulum) entrapping the accessory gland secretions and ejaculated spermatozoa. This chain is Semenogelin-2 (SEMG2), found in Pan troglodytes (Chimpanzee).